The following is a 398-amino-acid chain: Elongation factor Tu (398 aa).

A tr-type G domain is found at 10–207 (KPHVNIGTIG…TVDEYIPEPE (198 aa)). The segment at 19–26 (GHVDHGKT) is G1. 19–26 (GHVDHGKT) is a GTP binding site. Mg(2+) is bound at residue Thr-26. The tract at residues 63–67 (GITIN) is G2. The interval 84 to 87 (DAPG) is G3. GTP contacts are provided by residues 84–88 (DAPGH) and 139–142 (NKVD). The tract at residues 139 to 142 (NKVD) is G4. The tract at residues 177-179 (SAL) is G5.

The protein belongs to the TRAFAC class translation factor GTPase superfamily. Classic translation factor GTPase family. EF-Tu/EF-1A subfamily. As to quaternary structure, monomer.

The protein resides in the cytoplasm. The enzyme catalyses GTP + H2O = GDP + phosphate + H(+). GTP hydrolase that promotes the GTP-dependent binding of aminoacyl-tRNA to the A-site of ribosomes during protein biosynthesis. The polypeptide is Elongation factor Tu (Streptococcus suis (strain 98HAH33)).